Consider the following 253-residue polypeptide: uncharacterized protein (253 aa).

This sequence belongs to the A.longa ORF167/ORF288 family.

It localises to the plastid. This is an uncharacterized protein from Euglena longa (Euglenophycean alga).